The sequence spans 276 residues: NH(3)-dependent NAD(+) synthetase (276 aa).

39–46 (GLSGGVDS) is a binding site for ATP. Position 45 (aspartate 45) interacts with Mg(2+). Arginine 123 contributes to the deamido-NAD(+) binding site. ATP is bound at residue threonine 143. A Mg(2+)-binding site is contributed by glutamate 148. Positions 156 and 163 each coordinate deamido-NAD(+). ATP is bound by residues lysine 172 and serine 194. 254-255 (HK) is a deamido-NAD(+) binding site.

The protein belongs to the NAD synthetase family. Homodimer.

It carries out the reaction deamido-NAD(+) + NH4(+) + ATP = AMP + diphosphate + NAD(+) + H(+). The protein operates within cofactor biosynthesis; NAD(+) biosynthesis; NAD(+) from deamido-NAD(+) (ammonia route): step 1/1. Functionally, catalyzes the ATP-dependent amidation of deamido-NAD to form NAD. Uses ammonia as a nitrogen source. The chain is NH(3)-dependent NAD(+) synthetase from Hyperthermus butylicus (strain DSM 5456 / JCM 9403 / PLM1-5).